Here is a 491-residue protein sequence, read N- to C-terminus: 2,3-bisphosphoglycerate-independent phosphoglycerate mutase (491 aa).

2 residues coordinate Mn(2+): D11 and S61. S61 (phosphoserine intermediate) is an active-site residue. Residues H118, 147 to 148 (RD), R177, R183, 247 to 250 (RNDR), and K320 each bind substrate. Mn(2+)-binding residues include D386, H390, D427, H428, and H445.

The protein belongs to the BPG-independent phosphoglycerate mutase family. In terms of assembly, monomer. Mn(2+) is required as a cofactor.

It catalyses the reaction (2R)-2-phosphoglycerate = (2R)-3-phosphoglycerate. Its pathway is carbohydrate degradation; glycolysis; pyruvate from D-glyceraldehyde 3-phosphate: step 3/5. In terms of biological role, catalyzes the interconversion of 2-phosphoglycerate and 3-phosphoglycerate. The chain is 2,3-bisphosphoglycerate-independent phosphoglycerate mutase from Helicobacter pylori (strain J99 / ATCC 700824) (Campylobacter pylori J99).